The sequence spans 193 residues: AP-3 complex subunit sigma-2 (193 aa).

Belongs to the adaptor complexes small subunit family. In terms of assembly, adaptor protein complex 3 (AP-3) is a heterotetramer composed of two large adaptins (delta-type subunit AP3D1 and beta-type subunit AP3B1 or AP3B2), a medium adaptin (mu-type subunit AP3M1 or AP3M2) and a small adaptin (sigma-type subunit APS1 or AP3S2). Interacts with AGAP1. AP-3 associates with the BLOC-1 complex. Present in all adult tissues examined.

The protein localises to the golgi apparatus. Its subcellular location is the cytoplasmic vesicle membrane. In terms of biological role, part of the AP-3 complex, an adaptor-related complex which is not clathrin-associated. The complex is associated with the Golgi region as well as more peripheral structures. It facilitates the budding of vesicles from the Golgi membrane and may be directly involved in trafficking to lysosomes. In concert with the BLOC-1 complex, AP-3 is required to target cargos into vesicles assembled at cell bodies for delivery into neurites and nerve terminals. This is AP-3 complex subunit sigma-2 (AP3S2) from Homo sapiens (Human).